A 394-amino-acid polypeptide reads, in one-letter code: Elongation factor Tu (394 aa).

The region spanning 10–204 (KPHVNIGTIG…AVDSYIPQPV (195 aa)) is the tr-type G domain. The segment at 19–26 (GHVDHGKT) is G1. 19–26 (GHVDHGKT) is a binding site for GTP. A Mg(2+)-binding site is contributed by T26. The interval 60-64 (GITIS) is G2. Residues 81–84 (DCPG) form a G3 region. GTP contacts are provided by residues 81–85 (DCPGH) and 136–139 (NKVD). Residues 136–139 (NKVD) are G4. Residues 174-176 (SAL) form a G5 region.

The protein belongs to the TRAFAC class translation factor GTPase superfamily. Classic translation factor GTPase family. EF-Tu/EF-1A subfamily. As to quaternary structure, monomer.

The protein resides in the cytoplasm. The enzyme catalyses GTP + H2O = GDP + phosphate + H(+). Its function is as follows. GTP hydrolase that promotes the GTP-dependent binding of aminoacyl-tRNA to the A-site of ribosomes during protein biosynthesis. The protein is Elongation factor Tu of Rickettsia canadensis (strain McKiel).